The primary structure comprises 113 residues: MNAPDPRDQLARPLNNPFAEALDKPDRYVSFCGIDCDGNARILMQHIRRHIDDPTKGNAFWDKFRDKLEGRSSERCDELFLVHSYINMIRELFETYEDDDALALLQKIEEECC.

Belongs to the CowN family.

In terms of biological role, is required to sustain N(2)-dependent growth in the presence of low levels of carbon monoxide (CO). Probably acts by protecting the N(2) fixation ability of the nitrogenase complex, which is inactivated in the presence of CO. The protein is N(2)-fixation sustaining protein CowN of Azoarcus sp. (strain BH72).